The chain runs to 368 residues: Homoserine O-acetyltransferase (368 aa).

Residues 43–346 (ILLEHALTGT…EYGHDAFLVE (304 aa)) enclose the AB hydrolase-1 domain. The active-site Nucleophile is the Ser145. Position 212 (Arg212) interacts with substrate. Catalysis depends on residues Asp307 and His340. A substrate-binding site is contributed by Asp341.

Belongs to the AB hydrolase superfamily. MetX family. As to quaternary structure, homodimer.

The protein resides in the cytoplasm. The enzyme catalyses L-homoserine + acetyl-CoA = O-acetyl-L-homoserine + CoA. It functions in the pathway amino-acid biosynthesis; L-methionine biosynthesis via de novo pathway; O-acetyl-L-homoserine from L-homoserine: step 1/1. In terms of biological role, transfers an acetyl group from acetyl-CoA to L-homoserine, forming acetyl-L-homoserine. This Listeria monocytogenes serovar 1/2a (strain ATCC BAA-679 / EGD-e) protein is Homoserine O-acetyltransferase.